We begin with the raw amino-acid sequence, 555 residues long: Dimethylaniline monooxygenase [N-oxide-forming] 4 (555 aa).

Residues 9–13 (GAGVS), Glu32, and 40–41 (LW) each bind FAD. NADP(+) contacts are provided by residues 60–61 (TN) and 195–198 (SGGD). The chain crosses the membrane as a helical span at residues 515 to 532 (YLKVWGAPLLLASVLLIC).

Belongs to the FMO family. FAD serves as cofactor. As to expression, kidney and liver.

Its subcellular location is the microsome membrane. The protein localises to the endoplasmic reticulum membrane. It catalyses the reaction N,N-dimethylaniline + NADPH + O2 + H(+) = N,N-dimethylaniline N-oxide + NADP(+) + H2O. In terms of biological role, this protein is involved in the oxidative metabolism of a variety of xenobiotics such as drugs and pesticides. The polypeptide is Dimethylaniline monooxygenase [N-oxide-forming] 4 (FMO4) (Oryctolagus cuniculus (Rabbit)).